The primary structure comprises 40 residues: Photosystem II reaction center protein J (40 aa).

A helical membrane pass occupies residues 8-28 (IPLWLIGTVTGIPVIGLVGIF).

It belongs to the PsbJ family. PSII is composed of 1 copy each of membrane proteins PsbA, PsbB, PsbC, PsbD, PsbE, PsbF, PsbH, PsbI, PsbJ, PsbK, PsbL, PsbM, PsbT, PsbX, PsbY, PsbZ, Psb30/Ycf12, at least 3 peripheral proteins of the oxygen-evolving complex and a large number of cofactors. It forms dimeric complexes.

Its subcellular location is the plastid. The protein localises to the chloroplast thylakoid membrane. Its function is as follows. One of the components of the core complex of photosystem II (PSII). PSII is a light-driven water:plastoquinone oxidoreductase that uses light energy to abstract electrons from H(2)O, generating O(2) and a proton gradient subsequently used for ATP formation. It consists of a core antenna complex that captures photons, and an electron transfer chain that converts photonic excitation into a charge separation. The polypeptide is Photosystem II reaction center protein J (Cucumis sativus (Cucumber)).